Reading from the N-terminus, the 233-residue chain is U2 small nuclear ribonucleoprotein A' (233 aa).

4 LRR repeats span residues 20–40, 42–63, 65–86, and 89–110; these read KLTL…AITQ, KYQV…PKRF, NLQC…SFPS, and HITS…FKDK. The LRRCT domain occupies 122 to 160; it reads NPITEMENYRYFIIWLIPSLKVLDFKKVKQAERKTSEDM.

Belongs to the U2 small nuclear ribonucleoprotein A family. Associated with the spliceosome.

The protein localises to the nucleus. Involved in pre-mRNA splicing. This Candida albicans (strain SC5314 / ATCC MYA-2876) (Yeast) protein is U2 small nuclear ribonucleoprotein A' (LEA1).